Reading from the N-terminus, the 151-residue chain is Aspartate carbamoyltransferase regulatory chain (151 aa).

Zn(2+) is bound by residues Cys-107, Cys-112, Cys-135, and Cys-138.

It belongs to the PyrI family. As to quaternary structure, contains catalytic and regulatory chains. Zn(2+) serves as cofactor.

In terms of biological role, involved in allosteric regulation of aspartate carbamoyltransferase. The protein is Aspartate carbamoyltransferase regulatory chain of Psychromonas ingrahamii (strain DSM 17664 / CCUG 51855 / 37).